A 157-amino-acid chain; its full sequence is Glutathione peroxidase homolog BsaA (157 aa).

Cysteine 35 is a catalytic residue.

It belongs to the glutathione peroxidase family.

This Halalkalibacterium halodurans (strain ATCC BAA-125 / DSM 18197 / FERM 7344 / JCM 9153 / C-125) (Bacillus halodurans) protein is Glutathione peroxidase homolog BsaA (bsaA).